The sequence spans 221 residues: Uracil-DNA glycosylase (221 aa).

The active-site Proton acceptor is D63.

It belongs to the uracil-DNA glycosylase (UDG) superfamily. UNG family.

The protein resides in the cytoplasm. The catalysed reaction is Hydrolyzes single-stranded DNA or mismatched double-stranded DNA and polynucleotides, releasing free uracil.. Functionally, excises uracil residues from the DNA which can arise as a result of misincorporation of dUMP residues by DNA polymerase or due to deamination of cytosine. The sequence is that of Uracil-DNA glycosylase from Blochmanniella floridana.